Here is a 281-residue protein sequence, read N- to C-terminus: Apolipoprotein Eb (281 aa).

The signal sequence occupies residues 1-18; that stretch reads MRSLVVFFALAVLTGCQA. A propeptide spanning residues 19-24 is cleaved from the precursor; it reads RSLFQA. The 3 X approximate tandem repeats stretch occupies residues 34–66; that stretch reads MVDRFWQYVSELNTQTDGMVQNIKGSQLSRELD. Repeat copies occupy residues 67 to 88, 89 to 110, 111 to 132, 133 to 154, 155 to 176, 177 to 199, 200 to 227, 228 to 249, and 254 to 281. Residues 67 to 281 form a 9 X 22 AA approximate tandem repeats region; that stretch reads TLITDTMAEL…EATAALPTQA (215 aa).

Belongs to the apolipoprotein A1/A4/E family. In terms of assembly, homotetramer.

The protein resides in the secreted. It is found in the extracellular space. It localises to the extracellular matrix. In terms of biological role, APOE is an apolipoprotein, a protein associating with lipid particles, that mainly functions in lipoprotein-mediated lipid transport between organs via the plasma and interstitial fluids. APOE is a core component of plasma lipoproteins and is involved in their production, conversion and clearance. Apolipoproteins are amphipathic molecules that interact both with lipids of the lipoprotein particle core and the aqueous environment of the plasma. The sequence is that of Apolipoprotein Eb (apoeb) from Danio rerio (Zebrafish).